The primary structure comprises 697 residues: Transmembrane protein 168 (697 aa).

The next 3 helical transmembrane spans lie at 36 to 56, 63 to 83, and 89 to 109; these read LGYL…YVRW, LILV…ILYY, and AASL…LCFL. An N-linked (GlcNAc...) asparagine glycan is attached at Asn111. 5 helical membrane passes run 172 to 192, 199 to 219, 223 to 243, 265 to 285, and 293 to 313; these read MLVE…MLII, FLAI…SLET, PIAF…DIYF, LSVL…AFKL, and FVIP…IIFL. N-linked (GlcNAc...) asparagine glycosylation is present at Asn337. The next 2 helical transmembrane spans lie at 352–372 and 380–400; these read FCLI…ILGA and GIFL…HGLF. Asn533 and Asn598 each carry an N-linked (GlcNAc...) asparagine glycan.

It belongs to the TMEM168 family.

The protein resides in the nucleus membrane. Plays a key role in maintaining the cardiac electrical stability by modulating cell surface expression of SCN5A. Plays a role i the modulation of anxiety behavior by regulating GABAergic neuronal system in the nucleus accumbens. The protein is Transmembrane protein 168 (Tmem168) of Mus musculus (Mouse).